A 67-amino-acid chain; its full sequence is Large ribosomal subunit protein bL31 (67 aa).

The Zn(2+) site is built by C16, C18, C36, and C39.

The protein belongs to the bacterial ribosomal protein bL31 family. Type A subfamily. In terms of assembly, part of the 50S ribosomal subunit. Zn(2+) serves as cofactor.

Functionally, binds the 23S rRNA. The chain is Large ribosomal subunit protein bL31 from Treponema pallidum (strain Nichols).